We begin with the raw amino-acid sequence, 345 residues long: GTPase Obg (345 aa).

The Obg domain maps to 1-159 (MHFLDQAKIF…MWVWLRLKLL (159 aa)). Residues 121-142 (GDGGRGNASYKTSTNRAPRQHG) are disordered. The OBG-type G domain occupies 160–327 (ADCGLVGLPN…VLDKIIEILG (168 aa)). Residues 166-173 (GLPNAGKS), 191-195 (FTTIR), 212-215 (DIPG), 279-282 (NKID), and 308-310 (SGA) each bind GTP. Ser-173 and Thr-193 together coordinate Mg(2+).

The protein belongs to the TRAFAC class OBG-HflX-like GTPase superfamily. OBG GTPase family. In terms of assembly, monomer. The cofactor is Mg(2+).

It is found in the cytoplasm. In terms of biological role, an essential GTPase which binds GTP, GDP and possibly (p)ppGpp with moderate affinity, with high nucleotide exchange rates and a fairly low GTP hydrolysis rate. Plays a role in control of the cell cycle, stress response, ribosome biogenesis and in those bacteria that undergo differentiation, in morphogenesis control. The polypeptide is GTPase Obg (Rhizorhabdus wittichii (strain DSM 6014 / CCUG 31198 / JCM 15750 / NBRC 105917 / EY 4224 / RW1) (Sphingomonas wittichii)).